The following is a 472-amino-acid chain: Nuclear receptor subfamily 0 group B member 1 (472 aa).

Tandem repeats lie at residues 1–67 (MAGE…YRCC), 68–135 (FCGE…YRCC), and 136–202 (FCGE…YRSY). The tract at residues 1 to 255 (MAGEDHPWQG…RLITLKDPQV (255 aa)) is 4 X 67 AA tandem repeats. 3 consecutive short sequence motifs (LXXLL motif) follow at residues 13 to 17 (LYNLL), 80 to 84 (LYSML), and 148 to 152 (LYSLL). Residues 190–471 (QSTQAMAFLY…DMMLEMLCAK (282 aa)) form the NR LBD domain. A 4; truncated repeat occupies 203–255 (VCGEEQPQQISVASGTPVSADQTPATPQEQPRAPWWDASPGVQRLITLKDPQV). A compositionally biased stretch (polar residues) spans 214-231 (VASGTPVSADQTPATPQE). 2 disordered regions span residues 214 to 238 (VASG…APWW) and 324 to 343 (TTRR…ATEQ). The AF-2 motif motif lies at 463-468 (MMLEML).

Belongs to the nuclear hormone receptor family. NR0 subfamily. As to quaternary structure, homodimer. Interacts with NR5A1, NR5A2, NR0B2 and with COPS2. Interacts with ESRRB; represses ESRRB activity at the GATA6 promoter. Expressed in adult cerebral cortex, spinal cord, thymus, heart, lung, ovary, testis, adrenal gland, hypothalamus, spleen and kidney.

The protein localises to the nucleus. It is found in the cytoplasm. Functionally, nuclear receptor that lacks a DNA-binding domain and acts as a corepressor that inhibits the transcriptional activity of other nuclear receptors through heterodimeric interactions. Component of a cascade required for the development of the hypothalamic-pituitary-adrenal-gonadal axis. May also have a role in the development of the embryo and in the maintenance of embryonic stem cell pluripotency. This Mus musculus (Mouse) protein is Nuclear receptor subfamily 0 group B member 1 (Nr0b1).